We begin with the raw amino-acid sequence, 204 residues long: Tetraspanin-13 (204 aa).

At 1 to 19 the chain is on the cytoplasmic side; the sequence is MVCGGFSCSKNCLCALNLL. The chain crosses the membrane as a helical span at residues 20 to 40; that stretch reads YTLVSLLLIGIAAWGIGFGLI. Residues 41–44 are Extracellular-facing; that stretch reads SSLR. The chain crosses the membrane as a helical span at residues 45 to 65; that stretch reads VVGVVIAVGIFLFLIALVGLI. Residues 66 to 72 lie on the Cytoplasmic side of the membrane; sequence GAVKHHQ. A helical membrane pass occupies residues 73–93; the sequence is VLLFFYMIILLLVFIVQFSVS. Residues 94–167 are Extracellular-facing; that stretch reads CACLALNREQ…IGEYAGEVLR (74 aa). N-linked (GlcNAc...) asparagine glycosylation is found at Asn113 and Asn137. Ser143 bears the Phosphoserine mark. The helical transmembrane segment at 168-188 threads the bilayer; that stretch reads FVGGIGLFFSFTEILGVWLTY. Topologically, residues 189-204 are cytoplasmic; that stretch reads RYRNQKDPRANPSAFL.

The protein belongs to the tetraspanin (TM4SF) family.

It localises to the membrane. The polypeptide is Tetraspanin-13 (Tspan13) (Rattus norvegicus (Rat)).